Consider the following 188-residue polypeptide: Elongation factor P (188 aa).

The residue at position 34 (Lys-34) is an N6-(3,6-diaminohexanoyl)-5-hydroxylysine.

The protein belongs to the elongation factor P family. Post-translationally, may be beta-lysylated on the epsilon-amino group of Lys-34 by the combined action of EpmA and EpmB, and then hydroxylated on the C5 position of the same residue by EpmC (if this protein is present). Lysylation is critical for the stimulatory effect of EF-P on peptide-bond formation. The lysylation moiety may extend toward the peptidyltransferase center and stabilize the terminal 3-CCA end of the tRNA. Hydroxylation of the C5 position on Lys-34 may allow additional potential stabilizing hydrogen-bond interactions with the P-tRNA.

The protein localises to the cytoplasm. It participates in protein biosynthesis; polypeptide chain elongation. In terms of biological role, involved in peptide bond synthesis. Alleviates ribosome stalling that occurs when 3 or more consecutive Pro residues or the sequence PPG is present in a protein, possibly by augmenting the peptidyl transferase activity of the ribosome. Modification of Lys-34 is required for alleviation. This chain is Elongation factor P, found in Glaesserella parasuis serovar 5 (strain SH0165) (Haemophilus parasuis).